The primary structure comprises 371 residues: 4-hydroxybenzoate polyprenyltransferase, mitochondrial (371 aa).

The N-terminal 34 residues, 1 to 34 (MLGSRAAGFARGLRAVALAWLPGWRGRSFALARA), are a transit peptide targeting the mitochondrion. Over 35–83 (AGAPHGGDLQPPACPEPRGRQLSLSAAAVVDSAPRPLQPYLRLMRLDKP) the chain is Mitochondrial matrix. Residues 84 to 104 (IGTWLLYLPCTWSIGLAAEPG) traverse the membrane as a helical segment. At 105 to 108 (CFPD) the chain is on the mitochondrial intermembrane side. The chain crosses the membrane as a helical span at residues 109-129 (WYMLSLFGTGAILMRGAGCTI). Residues 130 to 148 (NDMWDQDYDKKVTRTANRP) lie on the Mitochondrial matrix side of the membrane. Residues 149-169 (IAAGDISTFQSFVFLGGQLTL) form a helical membrane-spanning segment. At 170–172 (ALG) the chain is on the mitochondrial intermembrane side. The chain crosses the membrane as a helical span at residues 173–193 (VLLCLNYYSIALGAGSLLLVI). The Mitochondrial matrix segment spans residues 194–203 (TYPLMKRISY). The chain crosses the membrane as a helical span at residues 204–224 (WPQLALGLTFNWGALLGWSAI). Topologically, residues 225–231 (KGSCDPS) are mitochondrial intermembrane. A helical transmembrane segment spans residues 232–252 (VCLPLYFSGVMWTLIYDTIYA). Residues 253-277 (HQDKRDDVLIGLKSTALRFGENTKP) are Mitochondrial matrix-facing. A helical transmembrane segment spans residues 278–298 (WLSGFSVAMLGALSLVGVNSG). The Mitochondrial intermembrane portion of the chain corresponds to 299–300 (QT). A helical membrane pass occupies residues 301–321 (APYYAALGAVGAHLTHQIYTL). At 322-332 (DIHRPEDCWNK) the chain is on the mitochondrial matrix side. The chain crosses the membrane as a helical span at residues 333 to 353 (FISNRTLGLIVFLGIVLGNLW). The Mitochondrial intermembrane segment spans residues 354–371 (KEKKTDKTKKGIENKIEN).

The protein belongs to the UbiA prenyltransferase family. Mg(2+) serves as cofactor. In terms of tissue distribution, widely expressed. Present in all of the tissues tested. Expressed at higher level in skeletal muscle, adrenal glands and the heart.

It is found in the mitochondrion inner membrane. The catalysed reaction is an all-trans-polyprenyl diphosphate + 4-hydroxybenzoate = a 4-hydroxy-3-(all-trans-polyprenyl)benzoate + diphosphate. The enzyme catalyses all-trans-decaprenyl diphosphate + 4-hydroxybenzoate = 4-hydroxy-3-(all-trans-decaprenyl)benzoate + diphosphate. It carries out the reaction all-trans-nonaprenyl diphosphate + 4-hydroxybenzoate = 4-hydroxy-3-(all-trans-nonaprenyl)benzoate + diphosphate. Its pathway is cofactor biosynthesis; ubiquinone biosynthesis. Mediates the second step in the final reaction sequence of coenzyme Q (CoQ) biosynthesis. Catalyzes the prenylation of para-hydroxybenzoate (PHB) with an all-trans polyprenyl donor (such as all-trans-decaprenyl diphosphate). The length of the polyprenyl side chain varies depending on the species, in humans, the side chain is comprised of 10 isoprenyls (decaprenyl) producing CoQ10 (also known as ubiquinone), whereas rodents predominantly generate CoQ9. However, this specificity is not complete, human tissues have low amounts of CoQ9 and rodent organs contain some CoQ10. Plays a central role in the biosynthesis of CoQ10. CoQ10 is a vital molecule that transports electrons from mitochondrial respiratory chain complexes. CoQs also function as cofactors for uncoupling protein and play a role as regulators of the extracellularly-induced ceramide-dependent apoptotic pathway. Regulates mitochondrial permeability transition pore (mPTP) opening and ROS production (pivotal events in cell death) in a tissue specific manner. This is 4-hydroxybenzoate polyprenyltransferase, mitochondrial from Homo sapiens (Human).